Consider the following 79-residue polypeptide: Large ribosomal subunit protein uL22 (79 aa).

It belongs to the universal ribosomal protein uL22 family. In terms of assembly, part of the 50S ribosomal subunit.

In terms of biological role, this protein binds specifically to 23S rRNA; its binding is stimulated by other ribosomal proteins, e.g. L4, L17, and L20. It is important during the early stages of 50S assembly. It makes multiple contacts with different domains of the 23S rRNA in the assembled 50S subunit and ribosome. Its function is as follows. The globular domain of the protein is located near the polypeptide exit tunnel on the outside of the subunit, while an extended beta-hairpin is found that lines the wall of the exit tunnel in the center of the 70S ribosome. In Clover proliferation phytoplasma, this protein is Large ribosomal subunit protein uL22 (rplV).